Reading from the N-terminus, the 824-residue chain is Dapper 1-B (824 aa).

Disordered stretches follow at residues 1-33 (MKPIPAAPEPLGQHQDSPRRKDKGEAESERQRT), 131-150 (EEHLETDSRPSSGFYELSDG), and 515-534 (HASSSFDERPPLDFKSEGSS). The tract at residues 2–343 (KPIPAAPEPL…PVRTNKPRTS (342 aa)) is interaction with tcf7l1-A. Basic and acidic residues predominate over residues 16–33 (DSPRRKDKGEAESERQRT). The stretch at 84–139 (EEKFLEDNILLLKKQLNCLRKRDAGLLSQLHELDKQINDLRIDVEKTEEHLETDSR) forms a coiled coil. The span at 520–530 (FDERPPLDFKS) shows a compositional bias: basic and acidic residues. The PDZ-binding motif lies at 821 to 824 (MTTV).

Belongs to the dapper family. Interacts with dbf4 and tcf7l1-A. Interacts with dvl2/dsh; the interaction is required for dact1-b phosphorylation by CaMK1D and seems to become disrupted by the phosphorylation. Phosphorylated by CaMK1D; the phosphorylation requires binding to dvl2/dsh. As to expression, expressed both in the dorsal lip in early gastrula and throughout the posterior presumptive ectoderm in early neurula. Expressed in the dorsal neural folds at the tailbud stage and highly expressed in the tadpole head, including the brain, retina and cartilaginous branchial arch derivatives.

It localises to the cytoplasm. It is found in the nucleus. Involved in regulation of intracellular signaling pathways during development. Specifically thought to play a role in canonical and/or non-canonical Wnt signaling pathways through interaction with DSH (Dishevelled) family proteins. Binds to dvl2 to regulate the degradation of beta-catenin (ctnnb1-A and possibly ctnnb1-B), thereby modulating the transcriptional activation of target genes of the Wnt signaling pathway. Seems to promote beta-catenin degradation if not phosphorylated and to block beta-catenin degradation if phosphorylated by CaMK1D. Involved in regulation of catenin delta/ctnnd1 protein level. May also bind to and directly stimulate the activity of tcf7l1-A. Also regulates the activation by dvl2 of jnk, a component of ctnnb1/beta-catenin-independent frizzled signaling. Required for notochord and head formation. This Xenopus laevis (African clawed frog) protein is Dapper 1-B (dact1-b).